A 402-amino-acid chain; its full sequence is MVQALTASLMAGALLARGIIGAKADPVNFAGIGGAAYEYNYTATGSFNQSIMPANFTPAGGIDTNDSSPTYHPFSDFDYQSLSLALYHEYIEYDLFNYGLTKFSDAEFDEAGIDAEYRHLIRFMAQQEIGHIELVTNMLGPNAPKACSYQYNFDTVGSFIDFAQTLTKWSESGVYGFLPHLDSRAAAALLLQSITTEARQQMSLRQLQGLFPYPVWFETGIPQSFAWSLIAPFIVGCPAENEKLVWQNFPALHLVSPPVHTNFTNGSFPQYPNGTYMYPAAVSTNRTFPLSLPGQSVELAWDAPGMAVGPNSSYITSTSAGTPRYAAWISQLNVTYAPLNITGNNSGVTYQPSSHLYNDSTQQVINGTNFLVLVDEAIPVTPFNITAINEHVVAGPLVYESG.

In terms of biological role, may have a function in stress-related responses of the cell. This Schizosaccharomyces pombe (strain 972 / ATCC 24843) (Fission yeast) protein is Protein rds1 (rds1).